Consider the following 597-residue polypeptide: Spastin (597 aa).

Over 1-20 the chain is Cytoplasmic; sequence MPNNDILRPLAIPAKYVGSF. Positions 21-37 form an intramembrane region, helical; that stretch reads LVFLYNGLYFVFVVNLW. Topologically, residues 38 to 597 are cytoplasmic; the sequence is SRLFGKATKT…DWNRLYGSNA (560 aa). The tract at residues 56-80 is disordered; that stretch reads RKLGKDMASRAPPRRGQSSEDNEDG. The MIT domain occupies 91–168; sequence HHKQAYAYIA…ENTRERMDEL (78 aa). Residues 193 to 289 form a disordered region; it reads SARKTSSEPS…PAMMAKQSCV (97 aa). The segment covering 214-231 has biased composition (polar residues); sequence SYKQSKSYKNSTTVTTKR. Over residues 232–252 the composition is skewed to low complexity; that stretch reads SQASPSFSSSSSSVNSTAGSS.

It belongs to the AAA ATPase family. Spastin subfamily. Homohexamer. The homohexamer is stabilized by ATP-binding. The homohexamer may adopt a ring conformation through which microtubules pass prior to being severed. Interacts with microtubules.

The protein localises to the membrane. It localises to the cytoplasm. It is found in the cytoskeleton. The protein resides in the microtubule organizing center. Its subcellular location is the centrosome. The catalysed reaction is n ATP + n H2O + a microtubule = n ADP + n phosphate + (n+1) alpha/beta tubulin heterodimers.. Functionally, ATP-dependent microtubule severing protein. Microtubule severing may promote reorganization of cellular microtubule arrays and the release of microtubules from the microtubule organizing center following nucleation. In Nematostella vectensis (Starlet sea anemone), this protein is Spastin.